A 441-amino-acid chain; its full sequence is tRNA modification GTPase MnmE (441 aa).

3 residues coordinate (6S)-5-formyl-5,6,7,8-tetrahydrofolate: Arg24, Glu81, and Lys121. The TrmE-type G domain occupies 218 to 366 (GMVVAIAGPP…LLRELTRFAA (149 aa)). GTP-binding positions include 228 to 233 (NVGKST), 247 to 253 (SPHAGTT), and 272 to 275 (DTAG). The Mg(2+) site is built by Ser232 and Thr253. Lys441 contributes to the (6S)-5-formyl-5,6,7,8-tetrahydrofolate binding site.

This sequence belongs to the TRAFAC class TrmE-Era-EngA-EngB-Septin-like GTPase superfamily. TrmE GTPase family. In terms of assembly, homodimer. Heterotetramer of two MnmE and two MnmG subunits. K(+) serves as cofactor.

It localises to the cytoplasm. In terms of biological role, exhibits a very high intrinsic GTPase hydrolysis rate. Involved in the addition of a carboxymethylaminomethyl (cmnm) group at the wobble position (U34) of certain tRNAs, forming tRNA-cmnm(5)s(2)U34. The protein is tRNA modification GTPase MnmE of Rhodopseudomonas palustris (strain ATCC BAA-98 / CGA009).